The chain runs to 867 residues: Translation initiation factor IF-2 (867 aa).

Residues 367-534 (TRAPVVTIMG…AILLQSEILE (168 aa)) enclose the tr-type G domain. Residues 376 to 383 (GHVDHGKT) form a G1 region. 376–383 (GHVDHGKT) contacts GTP. Residues 401 to 405 (GITQN) form a G2 region. Residues 422–425 (DTPG) are G3. GTP is bound by residues 422–426 (DTPGH) and 476–479 (NKID). The segment at 476–479 (NKID) is G4. A G5 region spans residues 512–514 (SAK).

This sequence belongs to the TRAFAC class translation factor GTPase superfamily. Classic translation factor GTPase family. IF-2 subfamily.

Its subcellular location is the cytoplasm. Its function is as follows. One of the essential components for the initiation of protein synthesis. Protects formylmethionyl-tRNA from spontaneous hydrolysis and promotes its binding to the 30S ribosomal subunits. Also involved in the hydrolysis of GTP during the formation of the 70S ribosomal complex. The polypeptide is Translation initiation factor IF-2 (Buchnera aphidicola subsp. Schizaphis graminum (strain Sg)).